We begin with the raw amino-acid sequence, 143 residues long: Large-conductance mechanosensitive channel (143 aa).

A run of 2 helical transmembrane segments spans residues 10–30 (FAVKGNVMDLAVGVIIGGAFS) and 89–109 (GSFITVAINFVILAFIIFLMV).

Belongs to the MscL family. In terms of assembly, homopentamer.

The protein resides in the cell inner membrane. Channel that opens in response to stretch forces in the membrane lipid bilayer. May participate in the regulation of osmotic pressure changes within the cell. The polypeptide is Large-conductance mechanosensitive channel (Burkholderia vietnamiensis (strain G4 / LMG 22486) (Burkholderia cepacia (strain R1808))).